We begin with the raw amino-acid sequence, 416 residues long: Phosphoglycerate kinase (416 aa).

Residues 24 to 26, R40, 63 to 66, R122, and R162 each bind substrate; these read DLN and HLGR. Residues K212, G300, E331, and 360-363 each bind ATP; that span reads GGDS.

This sequence belongs to the phosphoglycerate kinase family. Monomer.

It localises to the cytoplasm. The catalysed reaction is (2R)-3-phosphoglycerate + ATP = (2R)-3-phospho-glyceroyl phosphate + ADP. It functions in the pathway carbohydrate degradation; glycolysis; pyruvate from D-glyceraldehyde 3-phosphate: step 2/5. The protein is Phosphoglycerate kinase of Mycobacterium ulcerans (strain Agy99).